The following is a 253-amino-acid chain: (S)-2-haloacid dehalogenase (253 aa).

D8 (nucleophile) is an active-site residue. An (S)-2-haloacid-binding positions include 9–10, R39, and 114–115; these read AY and SN. Residues 171-176 form an important for catalytic activity region; the sequence is SSNGFD.

The protein belongs to the HAD-like hydrolase superfamily. S-2-haloalkanoic acid dehalogenase family. As to quaternary structure, homodimer.

It carries out the reaction an (S)-2-haloacid + H2O = a (2R)-2-hydroxycarboxylate + a halide anion + H(+). It catalyses the reaction (S)-2-chloropropanoate + H2O = (R)-lactate + chloride + H(+). Functionally, catalyzes the hydrolytic dehalogenation of small (S)-2-haloalkanoic acids to yield the corresponding (R)-2-hydroxyalkanoic acids. Acts on acids of short chain lengths, C(2) to C(4), with inversion of configuration at C-2. Active with 2-halogenated carboxylic acids and converts only the S-isomer (or L-isomer) of 2-chloropropionic acid with inversion of configuration to produce R-lactate (or D-isomer). The polypeptide is (S)-2-haloacid dehalogenase (Xanthobacter autotrophicus).